We begin with the raw amino-acid sequence, 315 residues long: Biotin synthase (315 aa).

The Radical SAM core domain maps to 39–266 (NSLQFATLLS…KSAIRLTAGR (228 aa)). [4Fe-4S] cluster-binding residues include cysteine 54, cysteine 58, and cysteine 61. 4 residues coordinate [2Fe-2S] cluster: cysteine 98, cysteine 129, cysteine 189, and arginine 261.

It belongs to the radical SAM superfamily. Biotin synthase family. Homodimer. [4Fe-4S] cluster serves as cofactor. The cofactor is [2Fe-2S] cluster.

It carries out the reaction (4R,5S)-dethiobiotin + (sulfur carrier)-SH + 2 reduced [2Fe-2S]-[ferredoxin] + 2 S-adenosyl-L-methionine = (sulfur carrier)-H + biotin + 2 5'-deoxyadenosine + 2 L-methionine + 2 oxidized [2Fe-2S]-[ferredoxin]. Its pathway is cofactor biosynthesis; biotin biosynthesis; biotin from 7,8-diaminononanoate: step 2/2. Its function is as follows. Catalyzes the conversion of dethiobiotin (DTB) to biotin by the insertion of a sulfur atom into dethiobiotin via a radical-based mechanism. The chain is Biotin synthase from Legionella pneumophila (strain Corby).